Consider the following 214-residue polypeptide: 3-demethoxyubiquinol 3-hydroxylase (214 aa).

Fe cation-binding residues include Glu-63, Glu-93, His-96, Glu-145, Glu-177, and His-180.

This sequence belongs to the COQ7 family. The cofactor is Fe cation.

Its subcellular location is the cell membrane. The catalysed reaction is a 5-methoxy-2-methyl-3-(all-trans-polyprenyl)benzene-1,4-diol + AH2 + O2 = a 3-demethylubiquinol + A + H2O. It participates in cofactor biosynthesis; ubiquinone biosynthesis. Its function is as follows. Catalyzes the hydroxylation of 2-nonaprenyl-3-methyl-6-methoxy-1,4-benzoquinol during ubiquinone biosynthesis. The sequence is that of 3-demethoxyubiquinol 3-hydroxylase from Nitrosococcus oceani (strain ATCC 19707 / BCRC 17464 / JCM 30415 / NCIMB 11848 / C-107).